A 314-amino-acid polypeptide reads, in one-letter code: Homoserine O-succinyltransferase (314 aa).

The active-site Acyl-thioester intermediate is the Cys142. Lys163 and Ser192 together coordinate substrate. His235 (proton acceptor) is an active-site residue. Residue Glu237 is part of the active site. Arg249 serves as a coordination point for substrate.

The protein belongs to the MetA family.

It localises to the cytoplasm. The enzyme catalyses L-homoserine + succinyl-CoA = O-succinyl-L-homoserine + CoA. The protein operates within amino-acid biosynthesis; L-methionine biosynthesis via de novo pathway; O-succinyl-L-homoserine from L-homoserine: step 1/1. Its function is as follows. Transfers a succinyl group from succinyl-CoA to L-homoserine, forming succinyl-L-homoserine. This Shewanella sediminis (strain HAW-EB3) protein is Homoserine O-succinyltransferase.